The following is a 387-amino-acid chain: Chaperone protein DnaJ (387 aa).

Positions 6–71 (DYYEILGVPR…EKRRKYDQFG (66 aa)) constitute a J domain. Residues 146 to 228 (GCEKEIPIYR…CGGTGTVRRQ (83 aa)) form a CR-type zinc finger. Positions 159, 162, 176, 179, 202, 205, 216, and 219 each coordinate Zn(2+). 4 CXXCXGXG motif repeats span residues 159–166 (CSVCGGSG), 176–183 (CQKCGGTG), 202–209 (CDACGGVG), and 216–223 (CRECGGTG).

The protein belongs to the DnaJ family. Homodimer. Requires Zn(2+) as cofactor.

Its subcellular location is the cytoplasm. Functionally, participates actively in the response to hyperosmotic and heat shock by preventing the aggregation of stress-denatured proteins and by disaggregating proteins, also in an autonomous, DnaK-independent fashion. Unfolded proteins bind initially to DnaJ; upon interaction with the DnaJ-bound protein, DnaK hydrolyzes its bound ATP, resulting in the formation of a stable complex. GrpE releases ADP from DnaK; ATP binding to DnaK triggers the release of the substrate protein, thus completing the reaction cycle. Several rounds of ATP-dependent interactions between DnaJ, DnaK and GrpE are required for fully efficient folding. Also involved, together with DnaK and GrpE, in the DNA replication of plasmids through activation of initiation proteins. The sequence is that of Chaperone protein DnaJ from Caldicellulosiruptor saccharolyticus (strain ATCC 43494 / DSM 8903 / Tp8T 6331).